We begin with the raw amino-acid sequence, 464 residues long: Clusterin-like protein 1 (464 aa).

An N-terminal signal peptide occupies residues 1–20 (MQPPLFVISVYLLWLKYCDS). Positions 56–109 (IKQMKIMMERREEEHAKLMKALKKCKEEKQEAQKLMNEVQERLEEEEKLCQASS) form a coiled coil. Disulfide bonds link Cys-105-Cys-331, Cys-116-Cys-323, Cys-119-Cys-320, Cys-124-Cys-313, and Cys-131-Cys-303. N-linked (GlcNAc...) asparagine glycosylation is found at Asn-195, Asn-255, Asn-309, Asn-349, Asn-398, and Asn-429.

This sequence belongs to the clusterin family.

The protein localises to the secreted. The chain is Clusterin-like protein 1 from Rattus norvegicus (Rat).